A 345-amino-acid chain; its full sequence is MDTVERTDLVARFTEEVIERDEIETLFEEQDEPTAYIGYAPTGEMHIGHFTTMRKLADFIDAGLDVTVLVADLHAHLDDAKSPFELLEARSEYYERAIEGMIAAAGADPDGISFIRGTDFQLDEPYTLDLYRLLADTTLSRAQRAGSEVVRQSENPSLGSLVYTLMQALDVAALDADIAYGGIDQRGIYMLAREQLPDHGYDKPACVFAPLLSGLSGGKMSASEAGSKINLTDDGEAIDEKIGGAYCPAGETEENGVLEYLEYLVFPVFDQRDTSFVVERPEKYGGDLEYGTYDELEADFVSGELHPADLKPAAAAAIDEVVAPVRELLLEDPELLASAYPERYE.

Tyr36 provides a ligand contact to L-tyrosine. Positions 41–49 match the 'HIGH' region motif; the sequence is PTGEMHIGH. L-tyrosine is bound by residues Tyr163, Gln167, Asp170, and Gln185.

Belongs to the class-I aminoacyl-tRNA synthetase family. TyrS type 3 subfamily. Homodimer.

Its subcellular location is the cytoplasm. It carries out the reaction tRNA(Tyr) + L-tyrosine + ATP = L-tyrosyl-tRNA(Tyr) + AMP + diphosphate + H(+). In terms of biological role, catalyzes the attachment of tyrosine to tRNA(Tyr) in a two-step reaction: tyrosine is first activated by ATP to form Tyr-AMP and then transferred to the acceptor end of tRNA(Tyr). In Natronomonas pharaonis (strain ATCC 35678 / DSM 2160 / CIP 103997 / JCM 8858 / NBRC 14720 / NCIMB 2260 / Gabara) (Halobacterium pharaonis), this protein is Tyrosine--tRNA ligase.